Here is a 226-residue protein sequence, read N- to C-terminus: Gap junction beta-2 protein (226 aa).

Topologically, residues 1–20 (MDWGGLHTILGGVNKHSTSI) are cytoplasmic. Residues 21-40 (GKIWLTVLFIFRIMILVVAA) traverse the membrane as a helical segment. Residues 41-75 (KEVWGDEQADFVCNTLQPGCKNVCYDHYFPISHIR) are Extracellular-facing. 3 disulfides stabilise this stretch: C53-C180, C60-C174, and C64-C169. Residues 76-98 (LWALQLIFVSTPALLVAMHVAYY) traverse the membrane as a helical segment. Residues 99-131 (RHEKKRKFIRGEIKTEFKDIEEIKKQKVRIEGS) lie on the Cytoplasmic side of the membrane. The helical transmembrane segment at 132-154 (LWWTYTGSIFFRVIFEAAFMYVF) threads the bilayer. At 155–192 (YVMYDGFAMQRLVKCNAWPCPNTVDCFVSRPTEKTVFT) the chain is on the extracellular side. Residues 193–215 (VFMIAVSGICILLNVTELCYLLI) form a helical membrane-spanning segment. At 216–226 (RFCSGKSKKPV) the chain is on the cytoplasmic side.

This sequence belongs to the connexin family. In terms of assembly, a connexon is composed of a hexamer of connexins. Interacts with CNST.

The protein localises to the cell membrane. Its subcellular location is the cell junction. It is found in the gap junction. Functionally, one gap junction consists of a cluster of closely packed pairs of transmembrane channels, the connexons, through which materials of low MW diffuse from one cell to a neighboring cell. The polypeptide is Gap junction beta-2 protein (GJB2) (Bos taurus (Bovine)).